Reading from the N-terminus, the 402-residue chain is Arginine biosynthesis bifunctional protein ArgJ (402 aa).

Positions 149, 175, 186, 266, 397, and 402 each coordinate substrate. The active-site Nucleophile is threonine 186.

This sequence belongs to the ArgJ family. In terms of assembly, heterotetramer of two alpha and two beta chains.

Its subcellular location is the cytoplasm. It catalyses the reaction N(2)-acetyl-L-ornithine + L-glutamate = N-acetyl-L-glutamate + L-ornithine. The enzyme catalyses L-glutamate + acetyl-CoA = N-acetyl-L-glutamate + CoA + H(+). Its pathway is amino-acid biosynthesis; L-arginine biosynthesis; L-ornithine and N-acetyl-L-glutamate from L-glutamate and N(2)-acetyl-L-ornithine (cyclic): step 1/1. It functions in the pathway amino-acid biosynthesis; L-arginine biosynthesis; N(2)-acetyl-L-ornithine from L-glutamate: step 1/4. Catalyzes two activities which are involved in the cyclic version of arginine biosynthesis: the synthesis of N-acetylglutamate from glutamate and acetyl-CoA as the acetyl donor, and of ornithine by transacetylation between N(2)-acetylornithine and glutamate. This chain is Arginine biosynthesis bifunctional protein ArgJ, found in Prochlorococcus marinus subsp. pastoris (strain CCMP1986 / NIES-2087 / MED4).